Reading from the N-terminus, the 473-residue chain is Fumarate hydratase class II (473 aa).

Residues S104 to T106, H128 to D131, S138 to N140, and T186 contribute to the substrate site. H187 serves as the catalytic Proton donor/acceptor. S318 is a catalytic residue. Residues S319 and K324 to N326 each bind substrate.

This sequence belongs to the class-II fumarase/aspartase family. Fumarase subfamily. As to quaternary structure, homotetramer.

It is found in the cytoplasm. The catalysed reaction is (S)-malate = fumarate + H2O. It functions in the pathway carbohydrate metabolism; tricarboxylic acid cycle; (S)-malate from fumarate: step 1/1. In terms of biological role, involved in the TCA cycle. Catalyzes the stereospecific interconversion of fumarate to L-malate. In Corynebacterium efficiens (strain DSM 44549 / YS-314 / AJ 12310 / JCM 11189 / NBRC 100395), this protein is Fumarate hydratase class II.